The primary structure comprises 307 residues: MASVLSYESLVHAVAGAVGSVTAMTVFFPLDTARLRLQVDEKRKSKTTHAVLLEIIKEEGLLAPYRGWFPVISSLCCSNFVYFYTFNSLKAVWVKGQRSSTGKDLVVGFVAGVVNVLLTTPLWVVNTRLKLQGAKFRNEDIIPTNYKGIIDAFHQIIRDEGILALWNGTFPSLLLVFNPAIQFMFYEGLKRQLLKKRMKLSSLDVFIIGAIAKAIATTVTYPMQTVQSILRFGRHRLNPENRTLGSLRNVLSLLHQRVKRFGIMGLYKGLEAKLLQTVLTAALMFLVYEKLTAATFTVMGLKSTHKH.

Residues 1 to 9 (MASVLSYES) lie on the Cytoplasmic side of the membrane. A necessary for targeting to peroxisomes and interaction with PEX19 region spans residues 1-147 (MASVLSYESL…NEDIIPTNYK (147 aa)). Solcar repeat units lie at residues 7–92 (YESL…LKAV), 99–192 (SSTG…LKRQ), and 200–294 (LSSL…LTAA). Residues 10–30 (LVHAVAGAVGSVTAMTVFFPL) form a helical membrane-spanning segment. Residues 31–66 (DTARLRLQVDEKRKSKTTHAVLLEIIKEEGLLAPYR) lie on the Lumenal side of the membrane. A helical transmembrane segment spans residues 67–87 (GWFPVISSLCCSNFVYFYTFN). Residues 88–104 (SLKAVWVKGQRSSTGKD) lie on the Cytoplasmic side of the membrane. A helical membrane pass occupies residues 105-125 (LVVGFVAGVVNVLLTTPLWVV). The Lumenal portion of the chain corresponds to 126 to 160 (NTRLKLQGAKFRNEDIIPTNYKGIIDAFHQIIRDE). A helical membrane pass occupies residues 161–181 (GILALWNGTFPSLLLVFNPAI). Topologically, residues 182-202 (QFMFYEGLKRQLLKKRMKLSS) are cytoplasmic. A Peroxisome localization signal motif is present at residues 190–199 (KRQLLKKRMK). A helical membrane pass occupies residues 203–223 (LDVFIIGAIAKAIATTVTYPM). Over 224 to 280 (QTVQSILRFGRHRLNPENRTLGSLRNVLSLLHQRVKRFGIMGLYKGLEAKLLQTVLT) the chain is Lumenal. A necessary for targeting to peroxisomes and interaction with PEX19 region spans residues 244-307 (LGSLRNVLSL…VMGLKSTHKH (64 aa)). Residues 281-301 (AALMFLVYEKLTAATFTVMGL) form a helical membrane-spanning segment. Residues 302-307 (KSTHKH) lie on the Cytoplasmic side of the membrane.

The protein belongs to the mitochondrial carrier (TC 2.A.29) family. As to quaternary structure, interacts (via N- and C-terminus peroxisomal targeting regions) with PEX19; the interaction occurs with the newly synthesized SLC25A17 in the cytosol. Expressed in liver, kidney, heart, spleen, muscle and lung.

The protein localises to the cytoplasm. It localises to the peroxisome membrane. It catalyses the reaction AMP(out) + CoA(in) = AMP(in) + CoA(out). The catalysed reaction is 3'-dephospho-CoA(in) + AMP(out) = 3'-dephospho-CoA(out) + AMP(in). The enzyme catalyses acetyl-CoA(in) + AMP(out) = acetyl-CoA(out) + AMP(in). It carries out the reaction AMP(in) + NAD(+)(out) = AMP(out) + NAD(+)(in). It catalyses the reaction FAD(in) + AMP(out) = FAD(out) + AMP(in). The catalysed reaction is FMN(in) + AMP(out) = FMN(out) + AMP(in). The enzyme catalyses AMP(in) + ADP(out) = AMP(out) + ADP(in). It carries out the reaction adenosine 3',5'-bisphosphate(in) + AMP(out) = adenosine 3',5'-bisphosphate(out) + AMP(in). It catalyses the reaction FAD(in) + CoA(out) = FAD(out) + CoA(in). The catalysed reaction is FAD(in) + adenosine 3',5'-bisphosphate(out) = FAD(out) + adenosine 3',5'-bisphosphate(in). The enzyme catalyses FMN(in) + CoA(out) = FMN(out) + CoA(in). It carries out the reaction FMN(in) + adenosine 3',5'-bisphosphate(out) = FMN(out) + adenosine 3',5'-bisphosphate(in). It catalyses the reaction FAD(out) + NAD(+)(in) = FAD(in) + NAD(+)(out). The catalysed reaction is FMN(out) + NAD(+)(in) = FMN(in) + NAD(+)(out). The enzyme catalyses NAD(+)(in) + CoA(out) = NAD(+)(out) + CoA(in). It carries out the reaction adenosine 3',5'-bisphosphate(out) + NAD(+)(in) = adenosine 3',5'-bisphosphate(in) + NAD(+)(out). It catalyses the reaction FMN(out) + ADP(in) = FMN(in) + ADP(out). The catalysed reaction is FAD(out) + ADP(in) = FAD(in) + ADP(out). The enzyme catalyses ADP(out) + CoA(in) = ADP(in) + CoA(out). It carries out the reaction adenosine 3',5'-bisphosphate(in) + ADP(out) = adenosine 3',5'-bisphosphate(out) + ADP(in). Functionally, peroxisomal transporter for multiple cofactors like coenzyme A (CoA), flavin adenine dinucleotide (FAD), flavin mononucleotide (FMN) and nucleotide adenosine monophosphate (AMP), and to a lesser extent for nicotinamide adenine dinucleotide (NAD(+)), adenosine diphosphate (ADP) and adenosine 3',5'-diphosphate (PAP). May catalyze the transport of free CoA, FAD and NAD(+) from the cytosol into the peroxisomal matrix by a counter-exchange mechanism. The protein is Peroxisomal membrane protein PMP34 (Slc25a17) of Mus musculus (Mouse).